A 698-amino-acid polypeptide reads, in one-letter code: MOXD1 homolog 1 (698 aa).

Residues 1–20 (MSVQDVLWIVLTVQLSFGLA) form the signal peptide. N-linked (GlcNAc...) asparagine glycosylation is found at Asn36, Asn140, and Asn221. The DOMON domain occupies 54-174 (GLYWLKWWIN…DTFKVLWSIG (121 aa)). Residue Tyr232 is part of the active site. Cu cation is bound by residues His265 and His266. A disulfide bond links Cys272 and Cys309. Cu cation is bound by residues His347, His425, and His427. Cystine bridges form between Cys403–Cys516 and Cys479–Cys501. Residue His425 is part of the active site. Asn465 is a glycosylation site (N-linked (GlcNAc...) asparagine). Met500 serves as a coordination point for Cu cation. Residues Asn538 and Asn561 are each glycosylated (N-linked (GlcNAc...) asparagine).

Belongs to the copper type II ascorbate-dependent monooxygenase family. Cu(2+) serves as cofactor.

Its subcellular location is the secreted. This Drosophila melanogaster (Fruit fly) protein is MOXD1 homolog 1.